Here is a 338-residue protein sequence, read N- to C-terminus: Lipoate-protein ligase A (338 aa).

The region spanning 29–216 is the BPL/LPL catalytic domain; that stretch reads PATQRVLFLW…AFFAYYGERV (188 aa). ATP is bound by residues arginine 71, 76-79, and lysine 134; that span reads GAVF. Residue lysine 134 participates in (R)-lipoate binding.

This sequence belongs to the LplA family. Monomer.

Its subcellular location is the cytoplasm. The catalysed reaction is L-lysyl-[lipoyl-carrier protein] + (R)-lipoate + ATP = N(6)-[(R)-lipoyl]-L-lysyl-[lipoyl-carrier protein] + AMP + diphosphate + H(+). The protein operates within protein modification; protein lipoylation via exogenous pathway; protein N(6)-(lipoyl)lysine from lipoate: step 1/2. It functions in the pathway protein modification; protein lipoylation via exogenous pathway; protein N(6)-(lipoyl)lysine from lipoate: step 2/2. Its function is as follows. Catalyzes both the ATP-dependent activation of exogenously supplied lipoate to lipoyl-AMP and the transfer of the activated lipoyl onto the lipoyl domains of lipoate-dependent enzymes. The protein is Lipoate-protein ligase A of Cronobacter sakazakii (strain ATCC BAA-894) (Enterobacter sakazakii).